The chain runs to 171 residues: Ribosome maturation factor RimP (171 aa).

It belongs to the RimP family.

Its subcellular location is the cytoplasm. Functionally, required for maturation of 30S ribosomal subunits. The chain is Ribosome maturation factor RimP from Anaeromyxobacter sp. (strain K).